The following is a 537-amino-acid chain: MSKQIEFNEVARRSLERGVDKLADAVKVTLGPRGRHVVLAKAFGGPTVTNDGVSIAREIELEDPFENLGAQLVKSVATKTNDVAGDGTTTATVLAQAIVRGGLKNIAAGANPMALGIGINAAADKVVEALLAAAKPVEGKTSIAQVATVSSRDEEIGEMVGEALTRVGTDGVVTVEESSTLATELVITEGVQFDKGYLSPYFVTDLDAQKAVYEDALVLLYREKITSLPDFLPLLEKVAESGKPLLIIAEDVEGEVLSTLVVNSIRKTIKAVAVKAPFFGDRRKAFLDDLAVVTGGTVINSDVGLTLKDAGLDLLGSARRVVVSKDETTIVDGAGTDDDIKGRVAQLRREIENTDSDWDREKLEERLAKLAGGVAVIKVGAATETDLKERKFRVEDAVNAAKAAVAEGIVPGGGSALVQASTELADNLGLTGDEATGVKVVREALQAPLYWIASNAGLDGSVVTSKVAEQPKGHGFNAATLTYGDLLADGVVDPVKVTRSAVVNAASVARMILTTESAVVEKPAEENEQQTGHGHSH.

Residues threonine 29–proline 32, aspartate 86–threonine 90, glycine 413, asparagine 477–alanine 479, and aspartate 493 contribute to the ATP site.

Belongs to the chaperonin (HSP60) family. As to quaternary structure, forms a cylinder of 14 subunits composed of two heptameric rings stacked back-to-back. Interacts with the co-chaperonin GroES.

It is found in the cytoplasm. It catalyses the reaction ATP + H2O + a folded polypeptide = ADP + phosphate + an unfolded polypeptide.. In terms of biological role, together with its co-chaperonin GroES, plays an essential role in assisting protein folding. The GroEL-GroES system forms a nano-cage that allows encapsulation of the non-native substrate proteins and provides a physical environment optimized to promote and accelerate protein folding. This is Chaperonin GroEL 2 from Rhodococcus jostii (strain RHA1).